We begin with the raw amino-acid sequence, 244 residues long: Probable Ni/Fe-hydrogenase B-type cytochrome subunit (244 aa).

A run of 4 helical transmembrane segments spans residues 39–59, 73–93, 150–171, and 204–221; these read LWHW…FFIG, FLMG…AIGM, FAMF…FAMY, and LGMW…YAAI.

Belongs to the HupC/HyaC/HydC family.

It localises to the cell membrane. In terms of biological role, probable b-type cytochrome. The sequence is that of Probable Ni/Fe-hydrogenase B-type cytochrome subunit (hoxZ) from Cupriavidus necator (strain ATCC 17699 / DSM 428 / KCTC 22496 / NCIMB 10442 / H16 / Stanier 337) (Ralstonia eutropha).